The following is an 815-amino-acid chain: Cell division cycle protein 48 (815 aa).

The interval 1–30 (MNAPSTMTDKKPEVEHLQGENPPKDTYSAE) is disordered. Residues 8–18 (TDKKPEVEHLQ) show a composition bias toward basic and acidic residues. Residues 267–273 (PGTGKTL), Asn368, His404, and 541–546 (GTGKTL) each bind ATP. The tract at residues 794–815 (DSADSNTNGPSFGNDGADDLYA) is disordered. Over residues 795-804 (SADSNTNGPS) the composition is skewed to polar residues.

Belongs to the AAA ATPase family. As to quaternary structure, component of the ribosome quality control complex (RQC), composed of the E3 ubiquitin ligase rkr1/ltn1, rqc1 and mtr1/rqc2, as well as cdc48 and its ubiquitin-binding cofactors. RQC forms a stable complex with 60S ribosomal subunits. Interacts with ubx2 and ubx3. Interacts with lub1. Interacts with rbd2 (via C-terminal SHP box); the interaction is required for rbd2-mediated cleavage of sre1 and sre2.

The protein resides in the cytoplasm. Its subcellular location is the nucleus. It catalyses the reaction ATP + H2O = ADP + phosphate + H(+). With respect to regulation, the first ATP-binding region has low ATPase activity. The second ATP-binding region is responsible for ATPase activity. ATP binding to the first ATP-binding region induces intrinsic activity of the second ATP-binding region. While ATP binding to the first ATP-binding region appears to prevent ATP hydrolysis by the second ATP-binding region, ADP-binding to first region promotes the coordinate and cooperative ATPase cycle of the second ATP-binding region. ATP binding to the first ATP-binding region induces a conformational change, promoting the rotation of the first ATP-binding region relative to the second ATP-binding region in the hexamer. Functionally, ATP-dependent chaperone which probably uses the energy provided by ATP hydrolysis to generate mechanical force to unfold substrate proteins, disassemble protein complexes, and disaggregate protein aggregates. By recruiting and promoting the degradation of ubiquitinated proteins, plays a role in the ubiquitin fusion degradation (UFD) pathway. Has a role in the endoplasmic reticulum-associated degradation (ERAD) pathway which mediates the cytoplasmic elimination of misfolded proteins exported from the ER. Involved in spindle disassembly. Component of the ribosome quality control complex (RQC), a ribosome-associated complex that mediates ubiquitination and extraction of incompletely synthesized nascent chains for proteasomal degradation. CDC48 may provide the mechanical force that dislodges the polyubiquitinated nascent peptides from the exit channel. Required for ribophagy, a process which relocalizes ribosomal particles into the vacuole for degradation in response to starvation. Has a role in substrate recognition mediating rbd2-dependent cleavage of sterol regulatory element-binding protein sre1 and sre2. The polypeptide is Cell division cycle protein 48 (Schizosaccharomyces pombe (strain 972 / ATCC 24843) (Fission yeast)).